A 293-amino-acid polypeptide reads, in one-letter code: Oxidoreductase clz16 (293 aa).

Belongs to the asaB hydroxylase/desaturase family.

The protein operates within secondary metabolite biosynthesis. Its function is as follows. Oxidoreductase; part of the gene cluster that mediates the biosynthesis of squalestatin S1 (SQS1, also known as zaragozic acid A), a heavily oxidized fungal polyketide that offers potent cholesterol lowering activity by targeting squalene synthase (SS). SQS1 is composed of a 2,8-dioxobicyclic[3.2.1]octane-3,4,5-tricarboxyclic acid core that is connected to two lipophilic polyketide arms. These initial steps feature the priming of an unusual benzoic acid starter unit onto the highly reducing polyketide synthase clz14, followed by oxaloacetate extension and product release to generate a tricarboxylic acid containing product. The phenylalanine ammonia lyase (PAL) clz10 and the acyl-CoA ligase clz12 are involved in transforming phenylalanine into benzoyl-CoA. The citrate synthase-like protein clz17 is involved in connecting the C-alpha-carbons of the hexaketide chain and oxaloacetate to afford the tricarboxylic acid unit. The potential hydrolytic enzymes, clz11 and clz13, are in close proximity to pks2 and may participate in product release. On the other side, the tetraketide arm is synthesized by a the squalestatin tetraketide synthase clz2 and enzymatically esterified to the core in the last biosynthetic step, by the acetyltransferase clz6. The biosynthesis of the tetraketide must involve 3 rounds of chain extension. After the first and second rounds methyl-transfer occurs, and in all rounds of extension the ketoreductase and dehydratase are active. The enoyl reductase and C-MeT of clz2 are not active in the final round of extension. The acetyltransferase clz6 appears to have a broad substrate selectivity for its acyl CoA substrate, allowing the in vitro synthesis of novel squalestatins. The biosynthesis of SQS1 requires several oxidative steps likely performed by oxidoreductases clz3, clz15 and clz16. Finally, in support of the identification of the cluster as being responsible for SQS1 production, the cluster contains a gene encoding a putative squalene synthase (SS) clz20, suggesting a likely mechanism for self-resistance. The protein is Oxidoreductase clz16 of Cochliobolus lunatus (Filamentous fungus).